The primary structure comprises 249 residues: PF03932 family protein CutC (249 aa).

This sequence belongs to the CutC family.

It localises to the cytoplasm. This is PF03932 family protein CutC from Bacteroides thetaiotaomicron (strain ATCC 29148 / DSM 2079 / JCM 5827 / CCUG 10774 / NCTC 10582 / VPI-5482 / E50).